Here is a 115-residue protein sequence, read N- to C-terminus: Aspartate 1-decarboxylase (115 aa).

Catalysis depends on serine 25, which acts as the Schiff-base intermediate with substrate; via pyruvic acid. The residue at position 25 (serine 25) is a Pyruvic acid (Ser). Threonine 57 provides a ligand contact to substrate. Residue tyrosine 58 is the Proton donor of the active site. Glycine 71–alanine 73 lines the substrate pocket.

This sequence belongs to the PanD family. Heterooctamer of four alpha and four beta subunits. Pyruvate is required as a cofactor. Post-translationally, is synthesized initially as an inactive proenzyme, which is activated by self-cleavage at a specific serine bond to produce a beta-subunit with a hydroxyl group at its C-terminus and an alpha-subunit with a pyruvoyl group at its N-terminus.

The protein resides in the cytoplasm. The enzyme catalyses L-aspartate + H(+) = beta-alanine + CO2. Its pathway is cofactor biosynthesis; (R)-pantothenate biosynthesis; beta-alanine from L-aspartate: step 1/1. Functionally, catalyzes the pyruvoyl-dependent decarboxylation of aspartate to produce beta-alanine. In Campylobacter concisus (strain 13826), this protein is Aspartate 1-decarboxylase.